A 333-amino-acid chain; its full sequence is Ketol-acid reductoisomerase (NADP(+)) (333 aa).

In terms of domain architecture, KARI N-terminal Rossmann spans 6-186 (TRVYTECDAD…GALRAGAIQT (181 aa)). Residues 29 to 32 (YGSQ), Lys52, Ser55, Ser57, and 87 to 90 (DPAQ) contribute to the NADP(+) site. His112 is an active-site residue. Gly138 lines the NADP(+) pocket. The KARI C-terminal knotted domain maps to 187-332 (TFTEETETDL…ARLRALFSWS (146 aa)). Mg(2+)-binding residues include Asp195, Glu199, Glu231, and Glu235. Ser256 contributes to the substrate binding site.

Belongs to the ketol-acid reductoisomerase family. Mg(2+) serves as cofactor.

It catalyses the reaction (2R)-2,3-dihydroxy-3-methylbutanoate + NADP(+) = (2S)-2-acetolactate + NADPH + H(+). The catalysed reaction is (2R,3R)-2,3-dihydroxy-3-methylpentanoate + NADP(+) = (S)-2-ethyl-2-hydroxy-3-oxobutanoate + NADPH + H(+). Its pathway is amino-acid biosynthesis; L-isoleucine biosynthesis; L-isoleucine from 2-oxobutanoate: step 2/4. The protein operates within amino-acid biosynthesis; L-valine biosynthesis; L-valine from pyruvate: step 2/4. In terms of biological role, involved in the biosynthesis of branched-chain amino acids (BCAA). Catalyzes an alkyl-migration followed by a ketol-acid reduction of (S)-2-acetolactate (S2AL) to yield (R)-2,3-dihydroxy-isovalerate. In the isomerase reaction, S2AL is rearranged via a Mg-dependent methyl migration to produce 3-hydroxy-3-methyl-2-ketobutyrate (HMKB). In the reductase reaction, this 2-ketoacid undergoes a metal-dependent reduction by NADPH to yield (R)-2,3-dihydroxy-isovalerate. The polypeptide is Ketol-acid reductoisomerase (NADP(+)) (Tropheryma whipplei (strain Twist) (Whipple's bacillus)).